The sequence spans 644 residues: MAISTGLFLLLGLLGQPWAGAAADSQAVVCEGTACYTAHWGKLSAAEAQHRCNENGGNLATVKSEEEARHVQQALTQLLKTKAPLEAKMGKFWIGLQREKGNCTYHDLPMRGFSWVGGGEDTAYSNWYKASKSSCIFKRCVSLILDLSLTPHPSHLPKWHESPCGTPEAPGNSIEGFLCKFNFKGMCRPLALGGPGRVTYTTPFQATTSSLEAVPFASVANVACGDEAKSETHYFLCNEKTPGIFHWGSSGPLCVSPKFGCSFNNGGCQQDCFEGGDGSFRCGCRPGFRLLDDLVTCASRNPCSSNPCTGGGMCHSVPLSENYTCRCPSGYQLDSSQVHCVDIDECQDSPCAQDCVNTLGSFHCECWVGYQPSGPKEEACEDVDECAAANSPCAQGCINTDGSFYCSCKEGYIVSGEDSTQCEDIDECSDARGNPCDSLCFNTDGSFRCGCPPGWELAPNGVFCSRGTVFSELPARPPQKEDNDDRKESTMPPTEMPSSPSGSKDVSNRAQTTGLFVQSDIPTASVPLEIEIPSEVSDVWFELGTYLPTTSGHSKPTHEDSVSAHSDTDGQNLLLFYILGTVVAISLLLVLALGILIYHKRRAKKEEIKEKKPQNAADSYSWVPERAESQAPENQYSPTPGTDC.

Positions 1–22 (MAISTGLFLLLGLLGQPWAGAA) are cleaved as a signal peptide. The Extracellular segment spans residues 23–572 (ADSQAVVCEG…SAHSDTDGQN (550 aa)). Residues 31–173 (EGTACYTAHW…CGTPEAPGNS (143 aa)) form the C-type lectin domain. Asparagine 102 is a glycosylation site (N-linked (GlcNAc...) asparagine). Cystine bridges form between cysteine 140–cysteine 164, cysteine 261–cysteine 272, cysteine 268–cysteine 282, cysteine 284–cysteine 297, cysteine 303–cysteine 314, cysteine 308–cysteine 325, cysteine 327–cysteine 340, cysteine 346–cysteine 355, cysteine 351–cysteine 364, cysteine 366–cysteine 380, cysteine 386–cysteine 397, cysteine 393–cysteine 406, cysteine 408–cysteine 422, cysteine 428–cysteine 440, cysteine 436–cysteine 449, and cysteine 451–cysteine 464. EGF-like domains follow at residues 257–298 (PKFG…VTCA) and 299–341 (SRNP…VHCV). A glycan (N-linked (GlcNAc...) asparagine) is linked at asparagine 322. Positions 342–381 (DIDECQDSPCAQDCVNTLGSFHCECWVGYQPSGPKEEACE) constitute an EGF-like 3; calcium-binding domain. The region spanning 382-423 (DVDECAAANSPCAQGCINTDGSFYCSCKEGYIVSGEDSTQCE) is the EGF-like 4; calcium-binding domain. Residues 424–465 (DIDECSDARGNPCDSLCFNTDGSFRCGCPPGWELAPNGVFCS) form the EGF-like 5; calcium-binding domain. The interval 473-508 (LPARPPQKEDNDDRKESTMPPTEMPSSPSGSKDVSN) is disordered. Basic and acidic residues predominate over residues 478–489 (PQKEDNDDRKES). Low complexity predominate over residues 490 to 501 (TMPPTEMPSSPS). Residues 573 to 593 (LLLFYILGTVVAISLLLVLAL) traverse the membrane as a helical segment. Residues 594 to 644 (GILIYHKRRAKKEEIKEKKPQNAADSYSWVPERAESQAPENQYSPTPGTDC) lie on the Cytoplasmic side of the membrane. Positions 605–644 (KEEIKEKKPQNAADSYSWVPERAESQAPENQYSPTPGTDC) are disordered. At serine 619 the chain carries Phosphoserine. A phosphotyrosine mark is found at tyrosine 620 and tyrosine 636. A compositionally biased stretch (polar residues) spans 631 to 644 (APENQYSPTPGTDC).

In terms of assembly, homodimer. Interacts with C1QBP; the association may represent a cell surface C1q receptor. Interacts with surfactant protein A/SFTPA1. Interacts with multimerin-2/MMRN2. Interacts with DAG1; this interaction plays an important role in endothelial cell migration. Interacts with CBL. Interacts with IGFBP7. Interacts with VEGFR2. Post-translationally, N- and O-glycosylated. Phosphorylated on Tyr-620 and Tyr-636 by SRC; these phosphorylations promote endothelial cell adhesion and migration. Expressed in lung, heart and bone marrow. Expressed at lower level in ovary, whole embryo and fetal liver. Not detected in brain, adult liver or thymus. Highly expressed in peritoneal cavity and bone marrow macrophages. Not detected in epithelial cells.

It is found in the cell membrane. Its function is as follows. Cell surface receptor that plays a role in various physiological processes including inflammation, phagocytosis, and cell adhesion. Plays a role in phagocytosis and enhances the uptake of apoptotic cells and immune complexes by acting as a receptor for defense collagens including surfactant protein A/SFTPA1, C1q, and mannose-binding lectin (MBL2). Plays a role in the regulation of endothelial cell function and adhesion by activating angiogenesis. Mechanistically, exerts its angiogenic function by associating with beta-dystroglycan, leading to SRC-dependent phosphorylation and subsequent recruitment of CBL. In turn, CBL provides a docking site for downstream signaling components, such as CRKL to enhance cell migration. Participates in angiogenesis also by acting as a receptor for the ECM pan-endothelial glycoprotein multimerin-2/MMRN2 and IGFBP7 ligands. Both ligands play a non-redundant role in CD93-mediated endothelial cell function. Acts as a key regulator of endothelial barrier function through modulating VEGFR2 function. The protein is Complement component C1q receptor (Cd93) of Mus musculus (Mouse).